A 328-amino-acid chain; its full sequence is L-lactate dehydrogenase (328 aa).

NAD(+) contacts are provided by residues valine 18, glutamate 39, lysine 46, tyrosine 71, and 85–86 (GA). Positions 88 and 94 each coordinate substrate. NAD(+) contacts are provided by residues serine 107, 124 to 126 (AAN), and serine 149. 126–129 (NPVD) is a binding site for substrate. 154–157 (DSAR) serves as a coordination point for substrate. Residues arginine 159 and histidine 174 each contribute to the beta-D-fructose 1,6-bisphosphate site. The Proton acceptor role is filled by histidine 181. Tyrosine 226 carries the phosphotyrosine modification. Threonine 235 contacts substrate.

Belongs to the LDH/MDH superfamily. LDH family. As to quaternary structure, homotetramer.

It is found in the cytoplasm. It catalyses the reaction (S)-lactate + NAD(+) = pyruvate + NADH + H(+). It participates in fermentation; pyruvate fermentation to lactate; (S)-lactate from pyruvate: step 1/1. With respect to regulation, allosterically activated by fructose 1,6-bisphosphate (FBP). In terms of biological role, catalyzes the conversion of lactate to pyruvate. In Streptococcus thermophilus (strain CNRZ 1066), this protein is L-lactate dehydrogenase.